The primary structure comprises 139 residues: Large ribosomal subunit protein bL17 (139 aa).

Belongs to the bacterial ribosomal protein bL17 family. Part of the 50S ribosomal subunit. Contacts protein L32.

This is Large ribosomal subunit protein bL17 from Myxococcus xanthus (strain DK1622).